The sequence spans 326 residues: D-alanine--D-alanine ligase (326 aa).

Residues 114 to 313 (KRVWLQHGLR…YAELCVSIVS (200 aa)) form the ATP-grasp domain. An ATP-binding site is contributed by 140–195 (PDRLGLPLILKPPHEGSTVGITKVAGYSDMKEGYAQAAKFDDEVLAEQFIAGRELT). The Mg(2+) site is built by D267, E280, and N282.

This sequence belongs to the D-alanine--D-alanine ligase family. The cofactor is Mg(2+). It depends on Mn(2+) as a cofactor.

The protein resides in the cytoplasm. It catalyses the reaction 2 D-alanine + ATP = D-alanyl-D-alanine + ADP + phosphate + H(+). It functions in the pathway cell wall biogenesis; peptidoglycan biosynthesis. Cell wall formation. In Bordetella petrii (strain ATCC BAA-461 / DSM 12804 / CCUG 43448), this protein is D-alanine--D-alanine ligase.